A 142-amino-acid polypeptide reads, in one-letter code: Large ribosomal subunit protein uL13 (142 aa).

This sequence belongs to the universal ribosomal protein uL13 family. As to quaternary structure, part of the 50S ribosomal subunit.

Its function is as follows. This protein is one of the early assembly proteins of the 50S ribosomal subunit, although it is not seen to bind rRNA by itself. It is important during the early stages of 50S assembly. This is Large ribosomal subunit protein uL13 from Treponema denticola (strain ATCC 35405 / DSM 14222 / CIP 103919 / JCM 8153 / KCTC 15104).